A 234-amino-acid polypeptide reads, in one-letter code: Large ribosomal subunit protein uL1 (234 aa).

This sequence belongs to the universal ribosomal protein uL1 family. As to quaternary structure, part of the 50S ribosomal subunit.

Functionally, binds directly to 23S rRNA. The L1 stalk is quite mobile in the ribosome, and is involved in E site tRNA release. Protein L1 is also a translational repressor protein, it controls the translation of the L11 operon by binding to its mRNA. The polypeptide is Large ribosomal subunit protein uL1 (Pseudoalteromonas translucida (strain TAC 125)).